Consider the following 75-residue polypeptide: Protein B7 (75 aa).

The polypeptide is Protein B7 (B7) (Human herpesvirus 6B (strain Z29) (HHV-6 variant B)).